Reading from the N-terminus, the 588-residue chain is L-fucose isomerase (588 aa).

Catalysis depends on proton acceptor residues glutamate 335 and aspartate 359. Mn(2+)-binding residues include glutamate 335, aspartate 359, and histidine 525.

It belongs to the L-fucose isomerase family. Requires Mn(2+) as cofactor.

Its subcellular location is the cytoplasm. It catalyses the reaction L-fucose = L-fuculose. It functions in the pathway carbohydrate degradation; L-fucose degradation; L-lactaldehyde and glycerone phosphate from L-fucose: step 1/3. Functionally, converts the aldose L-fucose into the corresponding ketose L-fuculose. The sequence is that of L-fucose isomerase from Streptococcus pneumoniae (strain ATCC 700669 / Spain 23F-1).